The following is a 188-amino-acid chain: UPF0398 protein OEOE_1093 (188 aa).

This sequence belongs to the UPF0398 family.

The chain is UPF0398 protein OEOE_1093 from Oenococcus oeni (strain ATCC BAA-331 / PSU-1).